The chain runs to 71 residues: DNA-directed RNA polymerase subunit omega (71 aa).

This sequence belongs to the RNA polymerase subunit omega family. In terms of assembly, the RNAP catalytic core consists of 2 alpha, 1 beta, 1 beta' and 1 omega subunit. When a sigma factor is associated with the core the holoenzyme is formed, which can initiate transcription.

It carries out the reaction RNA(n) + a ribonucleoside 5'-triphosphate = RNA(n+1) + diphosphate. Its function is as follows. Promotes RNA polymerase assembly. Latches the N- and C-terminal regions of the beta' subunit thereby facilitating its interaction with the beta and alpha subunits. The sequence is that of DNA-directed RNA polymerase subunit omega from Alkaliphilus oremlandii (strain OhILAs) (Clostridium oremlandii (strain OhILAs)).